The primary structure comprises 472 residues: WASH complex subunit 1 (472 aa).

Residues 1–51 (MPQNRSMESQAYSLPLILPDLRREEAIHQITDTLQHLQTVSNDIFSRILQR) are required for WASH complex assembly. Disordered stretches follow at residues 289–365 (ENSR…SDGR), 377–412 (GIGK…GDLM), and 426–472 (ISGK…DWES). 2 stretches are compositionally biased toward pro residues: residues 301-319 (LPPP…PPEP) and 327-336 (SLAPPLPIPA). Residues 352-472 (QGAPKEVVNP…GDGDEEDWES (121 aa)) form a VCA region. The WH2 domain occupies 364 to 386 (GRASLLESIRQAGGIGKAKLRNV). The segment covering 385–401 (NVKEKKLEKKKMKEQEQ) has biased composition (basic and acidic residues).

The protein belongs to the WASH1 family. Component of the WASH complex.

It is found in the early endosome membrane. The protein resides in the recycling endosome membrane. Its function is as follows. Acts as a nucleation-promoting factor at the surface of endosomes, where it recruits and activates the Arp2/3 complex to induce actin polymerization, playing a key role in the fission of tubules that serve as transport intermediates during endosome sorting. This chain is WASH complex subunit 1, found in Xenopus tropicalis (Western clawed frog).